The sequence spans 492 residues: T-box transcription factor TBX5-A (492 aa).

Positions 1–43 are disordered; that stretch reads MADSEDTFRLQNSPSDSEPKDLQNEGKSDKQNAAVSKSPSSQT. Positions 17-30 are enriched in basic and acidic residues; it reads SEPKDLQNEGKSDK. Positions 31 to 43 are enriched in polar residues; sequence QNAAVSKSPSSQT. Residues 62 to 237 constitute a DNA-binding region (T-box); sequence LWTKFHEVGT…NNPFAKGFRG (176 aa). Residues 331-352 are disordered; it reads AGEHPYKKPYVESSSSEDDHYY.

As to quaternary structure, monomer. Homodimer (via the T-box); binds DNA as homodimer. In terms of tissue distribution, expressed in the dorsal optic cup of developing eye, pectoral fin buds and heart. At 31 hpf, when the pectoral fin buds have begun bulging outwards, restricted expression is detected throughout the mesenchyme of the early fin buds and these high levels of expression continue until later stages.

It is found in the nucleus. The protein resides in the cytoplasm. In terms of biological role, required for pectoral fin formation. Together with tbx5b, involved in eye and heart development. Required for the looping stage of heart development. May bind to the core DNA motif of promoters. The polypeptide is T-box transcription factor TBX5-A (tbx5a) (Danio rerio (Zebrafish)).